The primary structure comprises 331 residues: Ketol-acid reductoisomerase (NADP(+)) (331 aa).

One can recognise a KARI N-terminal Rossmann domain in the interval 2–182; that stretch reads AQLFYDSDAD…GGTRAGILET (181 aa). Residues 25 to 28, S51, S53, and 83 to 86 contribute to the NADP(+) site; these read YGSQ and DEFQ. H108 is a catalytic residue. Position 134 (G134) interacts with NADP(+). Residues 183–328 enclose the KARI C-terminal knotted domain; the sequence is NFKEETETDL…KGLRAMFSWL (146 aa). Mg(2+) is bound by residues D191, E195, E227, and E231. S252 serves as a coordination point for substrate.

This sequence belongs to the ketol-acid reductoisomerase family. Requires Mg(2+) as cofactor.

The catalysed reaction is (2R)-2,3-dihydroxy-3-methylbutanoate + NADP(+) = (2S)-2-acetolactate + NADPH + H(+). It catalyses the reaction (2R,3R)-2,3-dihydroxy-3-methylpentanoate + NADP(+) = (S)-2-ethyl-2-hydroxy-3-oxobutanoate + NADPH + H(+). Its pathway is amino-acid biosynthesis; L-isoleucine biosynthesis; L-isoleucine from 2-oxobutanoate: step 2/4. It functions in the pathway amino-acid biosynthesis; L-valine biosynthesis; L-valine from pyruvate: step 2/4. In terms of biological role, involved in the biosynthesis of branched-chain amino acids (BCAA). Catalyzes an alkyl-migration followed by a ketol-acid reduction of (S)-2-acetolactate (S2AL) to yield (R)-2,3-dihydroxy-isovalerate. In the isomerase reaction, S2AL is rearranged via a Mg-dependent methyl migration to produce 3-hydroxy-3-methyl-2-ketobutyrate (HMKB). In the reductase reaction, this 2-ketoacid undergoes a metal-dependent reduction by NADPH to yield (R)-2,3-dihydroxy-isovalerate. The polypeptide is Ketol-acid reductoisomerase (NADP(+)) (Prochlorococcus marinus (strain MIT 9303)).